Here is a 274-residue protein sequence, read N- to C-terminus: Hydroxyethylthiazole kinase (274 aa).

Substrate is bound at residue methionine 46. ATP contacts are provided by arginine 122 and threonine 173. Substrate is bound at residue glycine 200.

It belongs to the Thz kinase family. Mg(2+) is required as a cofactor.

The catalysed reaction is 5-(2-hydroxyethyl)-4-methylthiazole + ATP = 4-methyl-5-(2-phosphooxyethyl)-thiazole + ADP + H(+). It participates in cofactor biosynthesis; thiamine diphosphate biosynthesis; 4-methyl-5-(2-phosphoethyl)-thiazole from 5-(2-hydroxyethyl)-4-methylthiazole: step 1/1. Catalyzes the phosphorylation of the hydroxyl group of 4-methyl-5-beta-hydroxyethylthiazole (THZ). In Clostridium tetani (strain Massachusetts / E88), this protein is Hydroxyethylthiazole kinase.